A 117-amino-acid chain; its full sequence is G antigen 13 (117 aa).

The segment at 1–117 is disordered; it reads MSWRGRSTYY…PEEGEKQSQC (117 aa). Acidic residues-rich tracts occupy residues 32–45 and 87–96; these read FSDE…EEGE and ECEDGPDGQE. The span at 103 to 117 shows a compositional bias: basic and acidic residues; the sequence is EEVKTPEEGEKQSQC.

It belongs to the GAGE family.

In Homo sapiens (Human), this protein is G antigen 13.